Here is a 142-residue protein sequence, read N- to C-terminus: Cytochrome c-type biogenesis protein CcmE (142 aa).

The Cytoplasmic portion of the chain corresponds to 1–2; that stretch reads MK. Residues 3–23 form a helical; Signal-anchor for type II membrane protein membrane-spanning segment; it reads GKYLLGILVILGALGYMVFGG. At 24–142 the chain is on the periplasmic side; the sequence is LGRNLVYFLT…EVRKLIEEAQ (119 aa). H118 and Y122 together coordinate heme.

This sequence belongs to the CcmE/CycJ family.

The protein resides in the cell inner membrane. In terms of biological role, heme chaperone required for the biogenesis of c-type cytochromes. Transiently binds heme delivered by CcmC and transfers the heme to apo-cytochromes in a process facilitated by CcmF and CcmH. The protein is Cytochrome c-type biogenesis protein CcmE of Thermus thermophilus (strain ATCC 27634 / DSM 579 / HB8).